The following is a 451-amino-acid chain: CCAAT/enhancer-binding protein (451 aa).

3 disordered regions span residues 210–236 (TYNN…EPID), 267–298 (QSNN…NSTN), and 328–389 (LKHH…AKVR). Composition is skewed to low complexity over residues 218–228 (ENSSVGSDSSS), 268–298 (SNNL…NSTN), and 334–350 (LQQT…QHAQ). Positions 359-370 (KHVDKGTEEYRR) are enriched in basic and acidic residues. In terms of domain architecture, bZIP spans 365–428 (TEEYRRRRER…SLHKQIYMQL (64 aa)). Positions 369–398 (RRRRERNNIAVRKSREKAKVRSKEVEERVK) are basic motif. The leucine-zipper stretch occupies residues 400 to 407 (LLKEKDAL).

It belongs to the bZIP family. C/EBP subfamily. In terms of assembly, binds DNA as a dimer and can form stable heterodimers.

The protein resides in the nucleus. May be required for the expression of gene products mediating border cell migration. Among the DNA sequences that this protein binds with high affinity is a conserved site within the promoter of its gene. This is CCAAT/enhancer-binding protein (slbo) from Drosophila virilis (Fruit fly).